Consider the following 512-residue polypeptide: 2,3-bisphosphoglycerate-independent phosphoglycerate mutase (512 aa).

Mn(2+) is bound by residues Asp13 and Ser63. Ser63 (phosphoserine intermediate) is an active-site residue. Residues His124, 154–155 (RD), Arg186, Arg192, 262–265 (RPDR), and Lys337 each bind substrate. Mn(2+) contacts are provided by Asp404, His408, Asp445, His446, and His463.

The protein belongs to the BPG-independent phosphoglycerate mutase family. Monomer. It depends on Mn(2+) as a cofactor.

The enzyme catalyses (2R)-2-phosphoglycerate = (2R)-3-phosphoglycerate. It participates in carbohydrate degradation; glycolysis; pyruvate from D-glyceraldehyde 3-phosphate: step 3/5. In terms of biological role, essential for rapid growth and for sporulation. Catalyzes the interconversion of 2-phosphoglycerate and 3-phosphoglycerate. The polypeptide is 2,3-bisphosphoglycerate-independent phosphoglycerate mutase (Oceanobacillus iheyensis (strain DSM 14371 / CIP 107618 / JCM 11309 / KCTC 3954 / HTE831)).